We begin with the raw amino-acid sequence, 453 residues long: Nuclear hormone receptor family member nhr-12 (453 aa).

The segment at 1 to 37 (MEQIPQEQKTEPFLASFTTTEKLGTETPTTSITPNTQ) is disordered. Low complexity predominate over residues 18 to 36 (TTTEKLGTETPTTSITPNT). The segment at residues 44 to 119 (KPNCAVCNEV…VGMNPECVQN (76 aa)) is a DNA-binding region (nuclear receptor). 2 consecutive NR C4-type zinc fingers follow at residues 47 to 67 (CAVC…CRAC) and 83 to 107 (CRAG…YDKC). The NR LBD domain occupies 178-451 (FSPASLPGLS…ENFVNIINGK (274 aa)).

The protein belongs to the nuclear hormone receptor family.

The protein resides in the nucleus. Orphan nuclear receptor. This chain is Nuclear hormone receptor family member nhr-12 (nhr-12), found in Caenorhabditis elegans.